The primary structure comprises 106 residues: Large ribosomal subunit protein eL42 (106 aa).

The interval Ser-37–Pro-56 is disordered.

The protein belongs to the eukaryotic ribosomal protein eL42 family.

This chain is Large ribosomal subunit protein eL42 (RPL44), found in Pichia kudriavzevii (Yeast).